The sequence spans 363 residues: Large ribosomal subunit protein uL4B (363 aa).

A C-terminal-extended nuclear localization signal region spans residues 280–363 (PENIISNADV…EKFLSVLHEN (84 aa)).

This sequence belongs to the universal ribosomal protein uL4 family. As to quaternary structure, component of the large ribosomal subunit (LSU). Mature yeast ribosomes consist of a small (40S) and a large (60S) subunit. The 40S small subunit contains 1 molecule of ribosomal RNA (18S rRNA) and at least 33 different proteins. The large 60S subunit contains 3 rRNA molecules (25S, 5.8S and 5S rRNA) and at least 46 different proteins. uL4 is associated with the polypeptide exit tunnel. uL4 interacts with its chaperone ACL4 and the nuclear import receptor KAP104.

Its subcellular location is the cytoplasm. Component of the ribosome, a large ribonucleoprotein complex responsible for the synthesis of proteins in the cell. The small ribosomal subunit (SSU) binds messenger RNAs (mRNAs) and translates the encoded message by selecting cognate aminoacyl-transfer RNA (tRNA) molecules. The large subunit (LSU) contains the ribosomal catalytic site termed the peptidyl transferase center (PTC), which catalyzes the formation of peptide bonds, thereby polymerizing the amino acids delivered by tRNAs into a polypeptide chain. The nascent polypeptides leave the ribosome through a tunnel in the LSU and interact with protein factors that function in enzymatic processing, targeting, and the membrane insertion of nascent chains at the exit of the ribosomal tunnel. This Schizosaccharomyces pombe (strain 972 / ATCC 24843) (Fission yeast) protein is Large ribosomal subunit protein uL4B (rpl401).